The following is a 272-amino-acid chain: Troponin T, fast skeletal muscle (272 aa).

The span at 1 to 50 (MSDEETEQVEEQYEEEEEAQEEEVQEEAPEPEEVQEDAVAEEEREEDEEE) shows a compositional bias: acidic residues. The interval 1–75 (MSDEETEQVE…EKVDFDDIQK (75 aa)) is disordered. N-acetylserine is present on serine 2. Serine 2 carries the phosphoserine modification. The segment covering 63 to 75 (PEGEKVDFDDIQK) has biased composition (basic and acidic residues). The residue at position 91 (serine 91) is a Phosphoserine. Residues 114-156 (RAERAEQQRIRAEKEREPQNRLAEEKARREEEDAKRRAEDDMK) show a composition bias toward basic and acidic residues. Residues 114-193 (RAERAEQQRI…TAREMKKKIL (80 aa)) are disordered. Phosphoserine is present on residues serine 162, serine 169, and serine 170. Over residues 184 to 193 (TAREMKKKIL) the composition is skewed to basic and acidic residues. Position 206 is a phosphoserine (serine 206). Tyrosine 222 is modified (phosphotyrosine). The interval 248 to 272 (RIDQAQKHSKKAGATAKGKVGGRWK) is disordered.

It belongs to the troponin T family. Expressed predominantly in skeletal muscle.

Troponin T is the tropomyosin-binding subunit of troponin, the thin filament regulatory complex which confers calcium-sensitivity to striated muscle actomyosin ATPase activity. In Mus musculus (Mouse), this protein is Troponin T, fast skeletal muscle (Tnnt3).